Consider the following 323-residue polypeptide: Olfactory receptor 51S1 (323 aa).

At 1 to 33 (MSTLPTQIAPNSSTSMAPTFLLVGMPGLSGAPS) the chain is on the extracellular side. N-linked (GlcNAc...) asparagine glycosylation occurs at N11. A helical transmembrane segment spans residues 34–54 (WWTLPLIAVYLLSALGNGTIL). Over 55 to 62 (WIIALQPA) the chain is Cytoplasmic. A helical transmembrane segment spans residues 63–83 (LHRPMHFFLFLLSVSDIGLVT). At 84-107 (ALMPTLLGIALAGAHTVPASACLL) the chain is on the extracellular side. A disulfide bond links C105 and C197. The chain crosses the membrane as a helical span at residues 108–128 (QMVFIHVFSVMESSVLLAMSI). Residues 129-147 (DRALAICRPLHYPALLTNG) are Cytoplasmic-facing. A helical transmembrane segment spans residues 148 to 168 (VISKISLAISFRCLGLHLPLP). At 169-203 (FLLAYMPYCLPQVLTHSYCLHPDVARLACPEAWGA) the chain is on the extracellular side. A helical membrane pass occupies residues 204–224 (AYSLFVVLSAMGLDPLLIFFS). At 225–244 (YGLIGKVLQGVESREDRWKA) the chain is on the cytoplasmic side. The helical transmembrane segment at 245–265 (GQTCAAHLSAVLLFYIPMILL) threads the bilayer. Residues 266–280 (ALINHPELPITQHTH) are Extracellular-facing. Residues 281–301 (TLLSYVHFLLPPLINPILYSV) form a helical membrane-spanning segment. The Cytoplasmic portion of the chain corresponds to 302–323 (KMKEIRKRILNRLQPRKVGGAQ).

The protein belongs to the G-protein coupled receptor 1 family.

The protein resides in the cell membrane. Its function is as follows. Odorant receptor. This is Olfactory receptor 51S1 (OR51S1) from Homo sapiens (Human).